Reading from the N-terminus, the 384-residue chain is Dual specificity protein phosphatase 5 (384 aa).

Residues 19-141 enclose the Rhodanese domain; that stretch reads AAARCVVLDC…FYSEYPECCV (123 aa). A Nuclear localization signal motif is present at residues 53-74; it reads RRARGGAVSARYVLPDEAARAR. Residues 178–319 enclose the Tyrosine-protein phosphatase domain; sequence GPVEILPFLY…LLQYESEILP (142 aa). The Phosphocysteine intermediate role is filled by C263.

The protein belongs to the protein-tyrosine phosphatase family. Non-receptor class dual specificity subfamily.

Its subcellular location is the nucleus. The catalysed reaction is O-phospho-L-tyrosyl-[protein] + H2O = L-tyrosyl-[protein] + phosphate. It catalyses the reaction O-phospho-L-seryl-[protein] + H2O = L-seryl-[protein] + phosphate. The enzyme catalyses O-phospho-L-threonyl-[protein] + H2O = L-threonyl-[protein] + phosphate. Functionally, dual specificity protein phosphatase; active with phosphotyrosine, phosphoserine and phosphothreonine residues. The highest relative activity is toward ERK1. In Homo sapiens (Human), this protein is Dual specificity protein phosphatase 5 (DUSP5).